The following is a 212-amino-acid chain: Ubiquitin-like protein MDY2 (212 aa).

In terms of domain architecture, Ubiquitin-like spans 74 to 152 (VHLTLKKIQA…TITVMIKPNP (79 aa)). The disordered stretch occupies residues 150–177 (PNPTISKEPEAEKSTNSPAPAPPQELTV).

In terms of assembly, interacts with GET4.

It localises to the cytoplasm. The protein localises to the cytosol. Its subcellular location is the nucleus. In terms of biological role, required for efficient mating. Involved in the production of alpha-factor, the KAR9 and TUB1 location to the shmoo tip and nuclear migration into pheromone-induced shmoos. The chain is Ubiquitin-like protein MDY2 (MDY2) from Saccharomyces cerevisiae (strain ATCC 204508 / S288c) (Baker's yeast).